The primary structure comprises 441 residues: Glutamate-1-semialdehyde 2,1-aminomutase (441 aa).

Lys-279 carries the post-translational modification N6-(pyridoxal phosphate)lysine.

It belongs to the class-III pyridoxal-phosphate-dependent aminotransferase family. HemL subfamily. Homodimer. Pyridoxal 5'-phosphate is required as a cofactor.

The protein localises to the cytoplasm. The enzyme catalyses (S)-4-amino-5-oxopentanoate = 5-aminolevulinate. It functions in the pathway porphyrin-containing compound metabolism; protoporphyrin-IX biosynthesis; 5-aminolevulinate from L-glutamyl-tRNA(Glu): step 2/2. The chain is Glutamate-1-semialdehyde 2,1-aminomutase from Leptospira borgpetersenii serovar Hardjo-bovis (strain JB197).